A 107-amino-acid polypeptide reads, in one-letter code: Large ribosomal subunit protein P1 (107 aa).

A disordered region spans residues 67–107 (GAAPAAAAPAAGGAPAAGAAPKKEEKKEPSEEEDMGFSLFD). The segment covering 69–86 (APAAAAPAAGGAPAAGAA) has biased composition (low complexity).

The protein belongs to the eukaryotic ribosomal protein P1/P2 family. P1 and P2 exist as dimers at the large ribosomal subunit.

Plays an important role in the elongation step of protein synthesis. In Chlamydomonas reinhardtii (Chlamydomonas smithii), this protein is Large ribosomal subunit protein P1.